Reading from the N-terminus, the 127-residue chain is Large ribosomal subunit protein bL17 (127 aa).

Belongs to the bacterial ribosomal protein bL17 family. Part of the 50S ribosomal subunit. Contacts protein L32.

The chain is Large ribosomal subunit protein bL17 from Legionella pneumophila (strain Lens).